The sequence spans 661 residues: Ubiquitin carboxyl-terminal hydrolase 25 (661 aa).

Positions 24-335 constitute a USP domain; sequence LGLRNLGNTC…KAYILFFSRS (312 aa). The active-site Nucleophile is the Cys33. His294 acts as the Proton acceptor in catalysis. Disordered stretches follow at residues 387-406 and 449-558; these read GNLA…RAEQ and FHQD…LCSS. The span at 449-461 shows a compositional bias: basic and acidic residues; it reads FHQDENIAPKANK. Polar residues-rich tracts occupy residues 462-475 and 545-558; these read ENSV…VNSG and NGVS…LCSS.

Belongs to the peptidase C19 family.

The catalysed reaction is Thiol-dependent hydrolysis of ester, thioester, amide, peptide and isopeptide bonds formed by the C-terminal Gly of ubiquitin (a 76-residue protein attached to proteins as an intracellular targeting signal).. Functionally, recognizes and hydrolyzes the peptide bond at the C-terminal Gly of ubiquitin. Involved in the processing of poly-ubiquitin precursors as well as that of ubiquitinated proteins. The sequence is that of Ubiquitin carboxyl-terminal hydrolase 25 (UBP25) from Arabidopsis thaliana (Mouse-ear cress).